We begin with the raw amino-acid sequence, 416 residues long: N-acetyl-L-cysteine deacetylase (416 aa).

Zn(2+) is bound by residues C128, H130, E164, H188, and H380.

This sequence belongs to the peptidase M20 family. It depends on Zn(2+) as a cofactor. Requires Co(2+) as cofactor.

The enzyme catalyses N-acetyl-L-cysteine + H2O = L-cysteine + acetate. It participates in amino-acid metabolism. Its function is as follows. Involved in a cysteine salvage pathway from S-alkylcysteine. Catalyzes the last step in this pathway, i.e. the deacetylation of N-acetyl-L-cysteine. This pathway is likely important in the catabolism of alkylated cysteine generated by proteolysis of alkylated glutathione formed in the detoxification of a wide range of electrophiles. The sequence is that of N-acetyl-L-cysteine deacetylase from Bacillus subtilis (strain 168).